The following is a 215-amino-acid chain: Pyridoxine/pyridoxamine 5'-phosphate oxidase (215 aa).

Substrate contacts are provided by residues arginine 9 to tyrosine 12 and lysine 69. FMN contacts are provided by residues arginine 64 to lysine 69, phenylalanine 79 to threonine 80, lysine 86, and glutamine 108. Residues tyrosine 126, arginine 130, and serine 134 each coordinate substrate. FMN-binding positions include glutamine 143–serine 144 and tryptophan 188. Arginine 194–histidine 196 lines the substrate pocket. Arginine 198 serves as a coordination point for FMN.

It belongs to the pyridoxamine 5'-phosphate oxidase family. In terms of assembly, homodimer. FMN serves as cofactor.

It catalyses the reaction pyridoxamine 5'-phosphate + O2 + H2O = pyridoxal 5'-phosphate + H2O2 + NH4(+). The enzyme catalyses pyridoxine 5'-phosphate + O2 = pyridoxal 5'-phosphate + H2O2. It participates in cofactor metabolism; pyridoxal 5'-phosphate salvage; pyridoxal 5'-phosphate from pyridoxamine 5'-phosphate: step 1/1. It functions in the pathway cofactor metabolism; pyridoxal 5'-phosphate salvage; pyridoxal 5'-phosphate from pyridoxine 5'-phosphate: step 1/1. In terms of biological role, catalyzes the oxidation of either pyridoxine 5'-phosphate (PNP) or pyridoxamine 5'-phosphate (PMP) into pyridoxal 5'-phosphate (PLP). In Pseudomonas fluorescens (strain Pf0-1), this protein is Pyridoxine/pyridoxamine 5'-phosphate oxidase.